A 142-amino-acid polypeptide reads, in one-letter code: Maximins y/Hv type 1 (142 aa).

The first 18 residues, 1-18 (MNFKYIVAVSFLIASGYA), serve as a signal peptide directing secretion. A propeptide spanning residues 19–43 (RSEENDVQSLSQREVLEEESLREIR) is cleaved from the precursor. Phe68 is subject to Phenylalanine amide. Residues 72-121 (TAEDHEVMKRLEAVMRDLDSLDHPEEASERETRGFNQEEIANLFTKKEKR) constitute a propeptide that is removed on maturation. Ile141 carries the post-translational modification Isoleucine amide.

It belongs to the bombinin family. As to expression, expressed by the skin glands.

Its subcellular location is the secreted. In terms of biological role, maximin-y shows antimicrobial activity against bacteria and against the fungus C.albicans. It has little hemolytic activity. Its function is as follows. Maximin-Hv shows antimicrobial activity against bacteria and against the fungus C.albicans. Shows strong hemolytic activity. The chain is Maximins y/Hv type 1 from Bombina maxima (Giant fire-bellied toad).